The sequence spans 355 residues: uncharacterized protein (355 aa).

It belongs to the 3-beta-HSD family.

This is an uncharacterized protein from Frog virus 3 (isolate Goorha) (FV-3).